The chain runs to 244 residues: Pyridoxine 5'-phosphate synthase (244 aa).

N7 is a binding site for 3-amino-2-oxopropyl phosphate. 9–10 (DH) provides a ligand contact to 1-deoxy-D-xylulose 5-phosphate. R18 is a 3-amino-2-oxopropyl phosphate binding site. H43 (proton acceptor) is an active-site residue. R45 and H50 together coordinate 1-deoxy-D-xylulose 5-phosphate. The active-site Proton acceptor is the E70. T100 lines the 1-deoxy-D-xylulose 5-phosphate pocket. H191 (proton donor) is an active-site residue. 3-amino-2-oxopropyl phosphate contacts are provided by residues G192 and 213–214 (GH).

The protein belongs to the PNP synthase family. As to quaternary structure, homooctamer; tetramer of dimers.

The protein resides in the cytoplasm. It carries out the reaction 3-amino-2-oxopropyl phosphate + 1-deoxy-D-xylulose 5-phosphate = pyridoxine 5'-phosphate + phosphate + 2 H2O + H(+). It participates in cofactor biosynthesis; pyridoxine 5'-phosphate biosynthesis; pyridoxine 5'-phosphate from D-erythrose 4-phosphate: step 5/5. Its function is as follows. Catalyzes the complicated ring closure reaction between the two acyclic compounds 1-deoxy-D-xylulose-5-phosphate (DXP) and 3-amino-2-oxopropyl phosphate (1-amino-acetone-3-phosphate or AAP) to form pyridoxine 5'-phosphate (PNP) and inorganic phosphate. In Laribacter hongkongensis (strain HLHK9), this protein is Pyridoxine 5'-phosphate synthase.